Reading from the N-terminus, the 730-residue chain is Catalase-peroxidase 1 (730 aa).

The tract at residues 1 to 24 (MQEKGKCPVTGMTKHKTSGGTTNQ) is disordered. Positions 95–218 (WHSAGTYRMG…LAAVQMGLIY (124 aa)) form a cross-link, tryptophyl-tyrosyl-methioninium (Trp-Tyr) (with M-244). H96 acts as the Proton acceptor in catalysis. The segment at residues 218–244 (YVNPEGPNGQPSALASGKDIRDTFARM) is a cross-link (tryptophyl-tyrosyl-methioninium (Tyr-Met) (with W-95)). H259 contacts heme b.

Belongs to the peroxidase family. Peroxidase/catalase subfamily. Homodimer or homotetramer. It depends on heme b as a cofactor. In terms of processing, formation of the three residue Trp-Tyr-Met cross-link is important for the catalase, but not the peroxidase activity of the enzyme.

The catalysed reaction is H2O2 + AH2 = A + 2 H2O. The enzyme catalyses 2 H2O2 = O2 + 2 H2O. In terms of biological role, bifunctional enzyme with both catalase and broad-spectrum peroxidase activity. This Alkaliphilus metalliredigens (strain QYMF) protein is Catalase-peroxidase 1.